Reading from the N-terminus, the 256-residue chain is Fumarate reductase cytochrome b subunit (256 aa).

Topologically, residues methionine 1–glutamine 30 are cytoplasmic. Residues serine 31–leucine 52 form a helical membrane-spanning segment. Histidine 44 serves as a coordination point for heme b. Over leucine 53–proline 76 the chain is Periplasmic. The helical transmembrane segment at isoleucine 77–methionine 98 threads the bilayer. Residue histidine 93 coordinates heme b. At arginine 99 to threonine 124 the chain is on the cytoplasmic side. The chain crosses the membrane as a helical span at residues leucine 125–threonine 149. Residue histidine 143 coordinates heme b. Over glutamine 150–serine 165 the chain is Periplasmic. Residues glutamate 166–tyrosine 188 traverse the membrane as a helical segment. Histidine 182 serves as a coordination point for heme b. The Cytoplasmic portion of the chain corresponds to arginine 189–arginine 206. The helical transmembrane segment at alanine 207–alanine 230 threads the bilayer. Over tyrosine 231–arginine 256 the chain is Periplasmic.

It belongs to the diheme cytochrome b FrdC family. Part of an enzyme complex containing three subunits: a flavoprotein (frdA), an iron-sulfur protein (frdB), and diheme cytochrome b (frdC). The cofactor is heme b.

Its subcellular location is the cell inner membrane. Functionally, the fumarate reductase enzyme complex is required for fumarate respiration using formate or sulfide as electron donor. This subunit anchors the complex in the membrane and binds a diheme cytochrome b. This Wolinella succinogenes (strain ATCC 29543 / DSM 1740 / CCUG 13145 / JCM 31913 / LMG 7466 / NCTC 11488 / FDC 602W) (Vibrio succinogenes) protein is Fumarate reductase cytochrome b subunit (frdC).